Reading from the N-terminus, the 98-residue chain is Large ribosomal subunit protein eL21 (98 aa).

Positions 1-24 (MVKKAHSFRRKTRGKLSKHPRRRG) are enriched in basic residues. Residues 1 to 27 (MVKKAHSFRRKTRGKLSKHPRRRGLPP) are disordered.

The protein belongs to the eukaryotic ribosomal protein eL21 family.

This chain is Large ribosomal subunit protein eL21, found in Thermococcus gammatolerans (strain DSM 15229 / JCM 11827 / EJ3).